The following is a 391-amino-acid chain: Odorant receptor 67d (391 aa).

Residues 1-45 lie on the Cytoplasmic side of the membrane; sequence MLKMAKVEPVERYCKVIRMIRFCVGFCGNDVADPNFRMWWLTYAV. Residues 46 to 66 form a helical membrane-spanning segment; sequence MAAIAFFFACTGYTIYVGVVI. The Extracellular segment spans residues 67–71; sequence NGDLT. The chain crosses the membrane as a helical span at residues 72 to 92; that stretch reads IILQALAMVGSAVQGLTKLLV. Over 93-140 the chain is Cytoplasmic; that stretch reads TANNASHMREVQNTYEDIYREYGSKGDEYAKCLEKRIRITWTLLIGFM. Residues 141 to 161 traverse the membrane as a helical segment; the sequence is LVYIILLGLVITFPIFYLLIL. Residues 162–164 are Extracellular-facing; it reads HQK. Residues 165 to 185 traverse the membrane as a helical segment; it reads VLVMQFLIPFLDHTTDGGHLI. Residues 186-191 are Cytoplasmic-facing; the sequence is LTAAHV. The chain crosses the membrane as a helical span at residues 192-212; that stretch reads ILITFGGFGNYGGDMYLFLFV. The Extracellular segment spans residues 213-268; it reads THVPLIKDIFCVKLTEFNELVMKRNDFPKVRAMLCDLLVWHQLYTRMLQTTKKIYS. Residues 269–289 traverse the membrane as a helical segment; sequence IVLFVQLSTTCVGLLCTISCI. Over 290–297 the chain is Cytoplasmic; sequence FMKAWPAA. A helical membrane pass occupies residues 298–318; the sequence is PLYLLYAAITLYTFCGLGTLV. The Extracellular portion of the chain corresponds to 319 to 391; the sequence is ENSNEDFLSV…FSMMLMNYLG (73 aa).

The protein belongs to the insect chemoreceptor superfamily. Heteromeric odorant receptor channel (TC 1.A.69) family. Or67d subfamily. In terms of assembly, interacts with Orco. Complexes exist early in the endomembrane system in olfactory sensory neurons (OSNs), coupling these complexes to the conserved ciliary trafficking pathway. As to expression, expressed in antenna.

Its subcellular location is the cell membrane. Its function is as follows. Plays a role in detection and sensitivity to pheromones and signal transduction of the fatty-acid-derived male pheromone 11-cis vaccenyl acetate (cVA). Acts in concert with Snmp and lush to capture cVA molecules on the surface of Or67d expressing olfactory dendrites and facilitate their transfer to the odorant-receptor Orco complex. Necessary to mediate behavioral responses to cVA by regulating both male and female mating behavior. Activation of Or67d neurons by cVA inhibits courtship of other males, whereas in females their activation promotes receptivity to other males. May form a complex with Orco to form odorant-sensing units, providing sensitive and prolonged odorant signaling and calcium permeability. The chain is Odorant receptor 67d (Or67d) from Drosophila melanogaster (Fruit fly).